A 605-amino-acid chain; its full sequence is Adenine deaminase (605 aa).

This sequence belongs to the metallo-dependent hydrolases superfamily. Adenine deaminase family. Mn(2+) serves as cofactor.

The catalysed reaction is adenine + H2O + H(+) = hypoxanthine + NH4(+). The chain is Adenine deaminase from Staphylothermus marinus (strain ATCC 43588 / DSM 3639 / JCM 9404 / F1).